A 468-amino-acid polypeptide reads, in one-letter code: MASRLTPLTLLLLLLLAGDRVTSDMIVGPGNLQEGESEGDSQKGGILDGESIQGNEDSPTLPITNLTVVPATVTKPFSQPATEPVQSTIQPTAEPFCLAPVTSCSDSEIRSAEAVLGEALTDFSLRLYQDFSVLKKRETNFIFSPFSIASLLTQILLGAGGETRVSLEHLLSYPQNFSCVHHALRAFMSEGFTSFSQIFHSSDLTIKDTFAEASQRLYGSSPRPLGNDSTASLELINDWVAKKTNLRIRRLLDSLPEDTRLILLNAVALSAKWKIAFDKGRTSTKPFHLKSSAIKVPMMNSKKYPVASFTDRTLNRPGGRLQLSHNLSFVILVPQTVKHHLQDLEQALSTAVFKAVIKKLEMTKFHPTHLTMPRIKVQSSQDMLDYFDFIYDVNLCGLTEDPDVQVSGIRHQATLELTESGVDATAASVVSVARNLLLFEVQQPFLFLLWDQQHKFPVFMGRVYDPKG.

A signal peptide spans 1–23 (MASRLTPLTLLLLLLLAGDRVTS). The segment at 27 to 60 (VGPGNLQEGESEGDSQKGGILDGESIQGNEDSPT) is disordered. N-linked (GlcNAc...) asparagine glycans are attached at residues Asn65, Asn176, Asn227, and Asn326. Intrachain disulfides connect Cys97-Cys396 and Cys104-Cys179.

This sequence belongs to the serpin family. In terms of processing, N- and O-glycosylated.

The protein resides in the secreted. Functionally, may play a potentially crucial role in regulating important physiological pathways including complement activation, blood coagulation, fibrinolysis and the generation of kinins. The sequence is that of Factor XIIa inhibitor from Bos taurus (Bovine).